The chain runs to 131 residues: Small ribosomal subunit protein bS6m (131 aa).

This sequence belongs to the bacterial ribosomal protein bS6 family. As to quaternary structure, component of the mitochondrial small ribosomal subunit (mt-SSU). Mature yeast 74S mitochondrial ribosomes consist of a small (37S) and a large (54S) subunit. The 37S small subunit contains a 15S ribosomal RNA (15S mt-rRNA) and 34 different proteins. The 54S large subunit contains a 21S rRNA (21S mt-rRNA) and 46 different proteins.

The protein localises to the mitochondrion. Functionally, component of the mitochondrial ribosome (mitoribosome), a dedicated translation machinery responsible for the synthesis of mitochondrial genome-encoded proteins, including at least some of the essential transmembrane subunits of the mitochondrial respiratory chain. The mitoribosomes are attached to the mitochondrial inner membrane and translation products are cotranslationally integrated into the membrane. The chain is Small ribosomal subunit protein bS6m (MRP17) from Saccharomyces cerevisiae (strain ATCC 204508 / S288c) (Baker's yeast).